The sequence spans 148 residues: F420H(2)-dependent quinone reductase MT1609 (148 aa).

Coenzyme F420-(gamma-Glu)n contacts are provided by residues 46 to 48 (AKT), 52 to 57 (RKTPLM), 68 to 71 (VASL), 79 to 83 (VWYHN), and Tyr125.

It belongs to the F420H(2)-dependent quinone reductase family.

Its subcellular location is the cell membrane. The enzyme catalyses oxidized coenzyme F420-(gamma-L-Glu)(n) + a quinol + H(+) = reduced coenzyme F420-(gamma-L-Glu)(n) + a quinone. Its function is as follows. Involved in a F420-dependent anti-oxidant mechanism that protects M.tuberculosis against oxidative stress and bactericidal agents. Catalyzes the F420H(2)-dependent two-electron reduction of quinones to dihydroquinones, thereby preventing the formation of cytotoxic semiquinones obtained by the one-electron reduction pathway. In vitro, catalyzes the reduction of menadione to menadiol; since menaquinone is the sole quinone electron carrier in the respiratory chain in M.tuberculosis, the physiological electron acceptor for Fqr-mediated F420H(2) oxidation is therefore likely to be the endogenous menaquinone found in the membrane fraction of M.tuberculosis. The chain is F420H(2)-dependent quinone reductase MT1609 from Mycobacterium tuberculosis (strain CDC 1551 / Oshkosh).